The chain runs to 486 residues: Hematopoietic lineage cell-specific protein (486 aa).

Positions Phe-27 to Asp-66 are involved in HAX-1 binding. The residue at position 41 (Lys-41) is an N6-acetyllysine. 3 Cortactin repeats span residues Ala-79–Asp-115, Ala-116–Asp-152, and Tyr-153–Asp-189. Lys-123 carries the post-translational modification N6-acetyllysine. Tyr-140 carries the post-translational modification Phosphotyrosine. Residues Tyr-190–Phe-212 form a Cortactin 4; truncated repeat. The residue at position 192 (Lys-192) is an N6-acetyllysine. Position 198 is a phosphotyrosine (Tyr-198). Tyr-222 is modified (phosphotyrosine; by FGR). Lys-241 carries the post-translational modification N6-acetyllysine. Over residues Glu-243–Pro-276 the composition is skewed to basic and acidic residues. Positions Glu-243–Pro-419 are disordered. Ser-275 is subject to Phosphoserine. Residue Thr-308 is modified to Phosphothreonine. Basic and acidic residues predominate over residues Glu-315 to Pro-324. Acidic residues-rich tracts occupy residues Gln-353 to Glu-383 and Glu-390 to Asp-405. 2 positions are modified to phosphotyrosine; by SYK and FES: Tyr-378 and Tyr-397. Positions Ser-406–Pro-419 are enriched in low complexity. Residues Ala-428–Glu-486 enclose the SH3 domain.

In terms of assembly, associates with the SH2 and SH3 domains of LCK. Binding to he LCK SH3 domain occurs constitutively, while binding to the LCK SH2 domain occurs only upon TCR stimulation. A similar binding pattern was observed with LYN, but not with FYN in which the FYN SH2 region associates upon TCR stimulation but the FYN SH3 region does not associate regardless of TCR stimulation. Directly associates with HAX1, through binding to its C-terminal region. Interacts with HS1BP3. Interacts with FES/FPS. Interacts (via SH2 domain) with FGR. Forms a multiprotein complex with LYN and ANKRD54. Post-translationally, phosphorylated by FES. Phosphorylated by LYN, FYN and FGR after cross-linking of surface IgM on B-cells. Phosphorylation by LYN, FYN and FGR requires prior phosphorylation by SYK or FES. In terms of tissue distribution, expressed only in tissues and cells of hematopoietic origin.

The protein localises to the membrane. The protein resides in the cytoplasm. It localises to the mitochondrion. Functionally, substrate of the antigen receptor-coupled tyrosine kinase. Plays a role in antigen receptor signaling for both clonal expansion and deletion in lymphoid cells. May also be involved in the regulation of gene expression. This Homo sapiens (Human) protein is Hematopoietic lineage cell-specific protein (HCLS1).